A 275-amino-acid polypeptide reads, in one-letter code: 3',5'-cyclic adenosine monophosphate phosphodiesterase CpdA (275 aa).

Positions 22, 24, 64, 94, 164, 203, and 205 each coordinate Fe cation. AMP contacts are provided by residues His24, Asp64, and 94-95 (NH). His205 lines the AMP pocket.

It belongs to the cyclic nucleotide phosphodiesterase class-III family. The cofactor is Fe(2+).

The catalysed reaction is 3',5'-cyclic AMP + H2O = AMP + H(+). Hydrolyzes cAMP to 5'-AMP. Plays an important regulatory role in modulating the intracellular concentration of cAMP, thereby influencing cAMP-dependent processes. This is 3',5'-cyclic adenosine monophosphate phosphodiesterase CpdA from Escherichia coli O157:H7.